The primary structure comprises 521 residues: Glucose-6-phosphate isomerase (521 aa).

The active-site Proton donor is glutamate 327. Residues histidine 358 and lysine 486 contribute to the active site.

This sequence belongs to the GPI family.

The protein localises to the cytoplasm. The enzyme catalyses alpha-D-glucose 6-phosphate = beta-D-fructose 6-phosphate. Its pathway is carbohydrate biosynthesis; gluconeogenesis. The protein operates within carbohydrate degradation; glycolysis; D-glyceraldehyde 3-phosphate and glycerone phosphate from D-glucose: step 2/4. Functionally, catalyzes the reversible isomerization of glucose-6-phosphate to fructose-6-phosphate. This chain is Glucose-6-phosphate isomerase, found in Bordetella petrii (strain ATCC BAA-461 / DSM 12804 / CCUG 43448).